Reading from the N-terminus, the 64-residue chain is Large ribosomal subunit protein bL35 (64 aa).

It belongs to the bacterial ribosomal protein bL35 family.

This is Large ribosomal subunit protein bL35 from Carboxydothermus hydrogenoformans (strain ATCC BAA-161 / DSM 6008 / Z-2901).